Consider the following 483-residue polypeptide: E3 ubiquitin-protein ligase TRIM50 (483 aa).

The segment at 16-57 (CPICLEVFKEPLMLQCGHSYCKDCLDNLSQHLDSELCCPVCR) adopts an RING-type zinc-finger fold. A B box-type zinc finger spans residues 84–125 (IEPTVCVHHRNPLSLFCEKDQEFICGLCGLLGSHQHHRVTPV). The Zn(2+) site is built by Cys-89, His-92, Cys-111, and His-117. Coiled coils occupy residues 127 to 169 (TVYS…NESD) and 203 to 236 (GLVA…GNES). Residues 275 to 474 (DIKLTVWKRL…LPMVLPPPSG (200 aa)) form the B30.2/SPRY domain. The residue at position 372 (Lys-372) is an N6-acetyllysine.

This sequence belongs to the TRIM/RBCC family. Can form dimers and trimers. Interacts with several E2 ubiquitin-conjugating enzymes, including UBE2L6, UBE2E1, UBE2E3. No interaction with UBE2H. Interacts with BECN1. Interacts with SQSTM1. Interacts with NLRP3. Auto-ubiquitinated. In terms of processing, acetylated by EP300 and KAT2B. HDAC6 drives TRIM50 deacetylation. Acetylation antagonizes with TRIM50 ubiquitination. In terms of tissue distribution, expressed in the stomach.

The protein localises to the cytoplasm. The enzyme catalyses S-ubiquitinyl-[E2 ubiquitin-conjugating enzyme]-L-cysteine + [acceptor protein]-L-lysine = [E2 ubiquitin-conjugating enzyme]-L-cysteine + N(6)-ubiquitinyl-[acceptor protein]-L-lysine.. Its function is as follows. E3 ubiquitin-protein ligase that ubiquitinates Beclin-1/BECN1 in a 'Lys-63'-dependent manner enhancing its binding to ULK1. In turn, promotes starvation-induced autophagy activation. Also interacts with p62/SQSTM1 protein and thereby induces the formation and the autophagy clearance of aggresome-associated polyubiquitinated proteins through HDAC6 interaction. Also promotes NLRP3 inflammasome activation by directly inducing NLRP3 oligomerization independent of its E3 ligase function. This is E3 ubiquitin-protein ligase TRIM50 (Trim50) from Mus musculus (Mouse).